The following is a 68-amino-acid chain: Small, acid-soluble spore protein I (68 aa).

Belongs to the SspI family.

The protein localises to the spore core. This Halalkalibacterium halodurans (strain ATCC BAA-125 / DSM 18197 / FERM 7344 / JCM 9153 / C-125) (Bacillus halodurans) protein is Small, acid-soluble spore protein I.